Consider the following 185-residue polypeptide: TRAF-interacting protein with FHA domain-containing protein A (185 aa).

Phosphothreonine is present on T9. Positions 48 to 104 (VKFGRNSNMCQYTFQDKQVSRVQFALQPFKQFNSSVLSFEIKNMSKKTSLMVDNQEL) constitute an FHA domain.

Belongs to the TIFA family. As to quaternary structure, homooligomer; homooligomerizes following phosphorylation at Thr-9. Interacts with IRAK1, TRAF2 and TRAF6. Interacts with TIFAB; binding to TIFAB inhibits TRAF6 activation, possibly by inducing a conformational change in TIFA. Interacts with ZCCHC11; binding to ZCCHC11 suppresses the TRAF6-dependent activation of NF-kappa-B. Post-translationally, phosphorylated at Thr-9 following detection of ADP-D-glycero-beta-D-manno-heptose (ADP-Heptose) by ALPK1. Phosphorylation at Thr-9 by ALPK1 leads to the formation of an intermolecular binding between the FHA domain and phosphorylated Thr-9, promoting TIFA oligomerization and TIFA-mediated NF-kappa-B activation.

It is found in the cytoplasm. Its function is as follows. Adapter molecule that plays a key role in the activation of pro-inflammatory NF-kappa-B signaling following detection of bacterial pathogen-associated molecular pattern metabolites (PAMPs). Promotes activation of an innate immune response by inducing the oligomerization and polyubiquitination of TRAF6, which leads to the activation of TAK1 and IKK through a proteasome-independent mechanism. TIFA-dependent innate immune response is triggered by ADP-D-glycero-beta-D-manno-heptose (ADP-Heptose), a potent PAMP present in all Gram-negative and some Gram-positive bacteria: ADP-Heptose is recognized by ALPK1, which phosphorylates TIFA at Thr-9, leading to TIFA homooligomerization and subsequent activation of pro-inflammatory NF-kappa-B signaling. This Rattus norvegicus (Rat) protein is TRAF-interacting protein with FHA domain-containing protein A.